Here is a 66-residue protein sequence, read N- to C-terminus: Large ribosomal subunit protein bL33 (66 aa).

Belongs to the bacterial ribosomal protein bL33 family.

The polypeptide is Large ribosomal subunit protein bL33 (Wolbachia pipientis subsp. Culex pipiens (strain wPip)).